Reading from the N-terminus, the 286-residue chain is ATP synthase gamma chain (286 aa).

This sequence belongs to the ATPase gamma chain family. As to quaternary structure, F-type ATPases have 2 components, CF(1) - the catalytic core - and CF(0) - the membrane proton channel. CF(1) has five subunits: alpha(3), beta(3), gamma(1), delta(1), epsilon(1). CF(0) has three main subunits: a, b and c.

Its subcellular location is the cell inner membrane. Its function is as follows. Produces ATP from ADP in the presence of a proton gradient across the membrane. The gamma chain is believed to be important in regulating ATPase activity and the flow of protons through the CF(0) complex. The sequence is that of ATP synthase gamma chain from Shewanella woodyi (strain ATCC 51908 / MS32).